A 976-amino-acid polypeptide reads, in one-letter code: 3-hydroxy-3-methylglutaryl-coenzyme A reductase (976 aa).

The Lumenal portion of the chain corresponds to 1 to 36 (MDHEGCQGQHPQQCCQWVSNAWSEFLDLLKNAETLD). The region spanning 36-217 (DIVIMLLGYI…FTFYTAILSI (182 aa)) is the SSD domain. The helical transmembrane segment at 37 to 57 (IVIMLLGYIAMHLTFVSLFLS) threads the bilayer. Over 58–64 (MRKMGSK) the chain is Cytoplasmic. Residues 65-85 (FWLGICTLFSSVFAFLFGLVV) traverse the membrane as a helical segment. Residues 86–90 (TTKLG) are Lumenal-facing. The helical transmembrane segment at 91-111 (VPISVILLSEGLPFLVVTIGF) threads the bilayer. Residues 112–169 (EKNIVLTRAVMSHAIEHRRIQAQNSKSGKRSPDGSTQNMIQYAVQAAIKEKGFEIIRD) are Cytoplasmic-facing. A helical membrane pass occupies residues 170-190 (YAIEIVILVIGAASGVQGGLQ). Over 191–193 (QFC) the chain is Lumenal. A helical transmembrane segment spans residues 194 to 214 (FLAAWTLFFDFILLFTFYTAI). Residues 215–272 (LSIKLRSTVSSVMSICVWPLRMMASRRVAENVAKGDDELNRVRGDAPLFGRKSSSIPK) lie on the Cytoplasmic side of the membrane. The chain crosses the membrane as a helical span at residues 273 to 293 (FKVLMILGFIFVNIVNICSIP). The Lumenal portion of the chain corresponds to 294–401 (FRNPSSMSTI…GGILKSLEDP (108 aa)). A helical transmembrane segment spans residues 402–422 (VLSKWIVIALALSVALNGYLF). Topologically, residues 423 to 976 (NVARWGIKDP…RYSEVKAIDE (554 aa)) are cytoplasmic. The active-site Charge relay system is the E618. Position 624-630 (624-630 (SASRGCK)) interacts with CoA. NADP(+) is bound by residues 685 to 687 (SRF) and 712 to 720 (DAMGMNMIS). The active-site Charge relay system is K752. 781-783 (VLK) lines the CoA pocket. The active-site Charge relay system is the D828. 923 to 924 (AH) is a CoA binding site. H924 serves as the catalytic Proton donor. The segment at 926–954 (QHNRSAAPSRSTTPGSSHDARLTGHDQCP) is disordered. 928–929 (NR) is an NADP(+) binding site. The span at 928 to 941 (NRSAAPSRSTTPGS) shows a compositional bias: polar residues. Residues 943–953 (HDARLTGHDQC) show a composition bias toward basic and acidic residues.

This sequence belongs to the HMG-CoA reductase family.

Its subcellular location is the endoplasmic reticulum membrane. It catalyses the reaction (R)-mevalonate + 2 NADP(+) + CoA = (3S)-3-hydroxy-3-methylglutaryl-CoA + 2 NADPH + 2 H(+). Its pathway is metabolic intermediate biosynthesis; (R)-mevalonate biosynthesis; (R)-mevalonate from acetyl-CoA: step 3/3. Functionally, HMG-CoA reductase; part of the first module of ergosterol biosynthesis pathway that includes the early steps of the pathway, conserved across all eukaryotes, and which results in the formation of mevalonate from acetyl-coenzyme A (acetyl-CoA). In this module, the cytosolic acetyl-CoA acetyltransferase catalyzes the formation of acetoacetyl-CoA. The hydroxymethylglutaryl-CoA synthase then condenses acetyl-CoA with acetoacetyl-CoA to form HMG-CoA. The rate-limiting step of the early module is the reduction to mevalonate by the 3-hydroxy-3-methylglutaryl-coenzyme A (HMG-CoA) reductase HMGR. The sequence is that of 3-hydroxy-3-methylglutaryl-coenzyme A reductase from Fusarium fujikuroi (Bakanae and foot rot disease fungus).